The sequence spans 198 residues: Large ribosomal subunit protein bL25 (198 aa).

It belongs to the bacterial ribosomal protein bL25 family. CTC subfamily. Part of the 50S ribosomal subunit; part of the 5S rRNA/L5/L18/L25 subcomplex. Contacts the 5S rRNA. Binds to the 5S rRNA independently of L5 and L18.

In terms of biological role, this is one of the proteins that binds to the 5S RNA in the ribosome where it forms part of the central protuberance. In Bordetella avium (strain 197N), this protein is Large ribosomal subunit protein bL25.